Consider the following 573-residue polypeptide: Leucine aminopeptidase, chloroplastic (573 aa).

Residues 1–53 (MATLRVSSLLASSPSSLHCNPSVFTKCQSSPRWAFSFSVTPLCSRRSKRIVHC) constitute a chloroplast transit peptide. 2 residues coordinate Mn(2+): K342 and D347. K354 is an active-site residue. Mn(2+) contacts are provided by D367, D427, and E429. R431 is a catalytic residue.

The protein belongs to the peptidase M17 family. In terms of assembly, homohexamer (dimer of homotrimers). The cofactor is Mn(2+). In terms of tissue distribution, in tubers and floral buds of untreated plants. After abscisic acid (ABA) treatment or mechanical wounding is mostly accumulated in leaves, to a lesser extent in stems, but not in roots.

The protein resides in the plastid. The protein localises to the chloroplast. It catalyses the reaction Release of an N-terminal amino acid, Xaa-|-Yaa-, in which Xaa is preferably Leu, but may be other amino acids including Pro although not Arg or Lys, and Yaa may be Pro. Amino acid amides and methyl esters are also readily hydrolyzed, but rates on arylamides are exceedingly low.. It carries out the reaction Release of N-terminal proline from a peptide.. In terms of biological role, presumably involved in the processing and regular turnover of intracellular proteins. The polypeptide is Leucine aminopeptidase, chloroplastic (LAP) (Solanum tuberosum (Potato)).